Reading from the N-terminus, the 335-residue chain is GTPase Obg (335 aa).

Residues 1–159 (MQFIDRSEIE…RKLLLELKLL (159 aa)) form the Obg domain. The region spanning 160-328 (AEVGIIGLPN…LLARVWQVLE (169 aa)) is the OBG-type G domain. GTP-binding positions include 166-173 (GLPNAGKS), 191-195 (FTTLV), 213-216 (DIPG), 280-283 (NKAD), and 309-311 (SAA). The Mg(2+) site is built by serine 173 and threonine 193.

Belongs to the TRAFAC class OBG-HflX-like GTPase superfamily. OBG GTPase family. As to quaternary structure, monomer. It depends on Mg(2+) as a cofactor.

It is found in the cytoplasm. In terms of biological role, an essential GTPase which binds GTP, GDP and possibly (p)ppGpp with moderate affinity, with high nucleotide exchange rates and a fairly low GTP hydrolysis rate. Plays a role in control of the cell cycle, stress response, ribosome biogenesis and in those bacteria that undergo differentiation, in morphogenesis control. This is GTPase Obg from Gloeobacter violaceus (strain ATCC 29082 / PCC 7421).